The primary structure comprises 141 residues: MSANNMRLLCLLLACYISAIVAHRPSYRSSGSDRYVDVVRASETAEAQAAALTNAAGAAASAAKLDGADWYALNRYGWEQGRPLLAKPYGPLDNLYAAALPPRSFVAEIDPVFKKSHYGGAYGGKSVTLNTGAKVAVAALN.

The first 22 residues, 1–22 (MSANNMRLLCLLLACYISAIVA), serve as a signal peptide directing secretion.

It belongs to the chorion protein S16 family.

It localises to the secreted. Chorion membrane (egg shell) protein; plays a role in protecting the egg from the environment. This chain is Chorion protein S16 (Cp16), found in Drosophila subobscura (Fruit fly).